Reading from the N-terminus, the 233-residue chain is Large ribosomal subunit protein uL22m (233 aa).

Belongs to the universal ribosomal protein uL22 family. As to quaternary structure, component of the mitochondrial ribosome large subunit (39S) which comprises a 16S rRNA and about 50 distinct proteins.

Its subcellular location is the mitochondrion. The sequence is that of Large ribosomal subunit protein uL22m (mRpL22) from Drosophila pseudoobscura pseudoobscura (Fruit fly).